A 223-amino-acid polypeptide reads, in one-letter code: Superoxide dismutase [Mn], mitochondrial (223 aa).

The transit peptide at 1-24 (MNLIIGVAGRLLVGKNYCLNTQRL) directs the protein to the mitochondrion. Positions 50, 98, 184, and 188 each coordinate Mn(2+).

The protein belongs to the iron/manganese superoxide dismutase family. Homotetramer. Requires Mn(2+) as cofactor.

Its subcellular location is the mitochondrion matrix. The enzyme catalyses 2 superoxide + 2 H(+) = H2O2 + O2. Its function is as follows. Destroys superoxide anion radicals which are normally produced within the cells and which are toxic to biological systems. This chain is Superoxide dismutase [Mn], mitochondrial (sod-2), found in Onchocerca volvulus.